The following is a 1159-amino-acid chain: CRISPR-associated endoribonuclease Cas13a (1159 aa).

Residues 1–11 form a binds crRNA repeat and spacer region; it reads MKVTKVGGISH. Residues 1–170 are NTD; it reads MKVTKVGGIS…NNIEKVEGKS (170 aa). Binds crRNA repeat stretches follow at residues 139–151, 172–176, 224–233, 271–276, 294–297, and 301–305; these read NKIN…FEKN, RNIIY, REFYHEIIGR, QVFYKY, HFVE, and SQLLK. A helical-1 region spans residues 171–360; that stretch reads KRNIIYDYYR…YNYYLQDGEI (190 aa). The tract at residues 319 to 328 is binds crRNA processing site; it reads KIKRIFEYQN. Binds crRNA repeat stretches follow at residues 336 to 340 and 371 to 378; these read KLLNK and QNEAFLRN. Residues 361–508 are HEPN-like fold 1-I; sequence ATSDFIARNR…SKKMFQNEIN (148 aa). Active-site for target RNA cleavage residues include R472 and H477. The segment at 509-751 is helical-2; it reads EKKLKLKIFR…EFLREIKLGN (243 aa). The tract at residues 519-522 is binds target RNA; that stretch reads QLNS. Residues 547–558 form a binds crRNA spacer region; that stretch reads NKNIPFVPSFTK. Positions 590-597 are binds target RNA; the sequence is DAQIYLLK. Positions 718–722 are binds crRNA spacer; that stretch reads KQEFD. Residues 752–813 are HEPN-like fold 1-II; it reads ILKYTERLNM…NLDNNRVTED (62 aa). The segment at 780 to 783 is binds crRNA repeat; sequence SLEK. The binds crRNA spacer and target RNA stretch occupies residues 804–810; it reads NLDNNRV. Residues 814 to 946 form a linker region; sequence FELEADEIGK…EYTHLKNKVE (133 aa). 2 binds crRNA spacer regions span residues 845 to 857 and 938 to 942; these read KIYF…IKHR and YTHLK. Residues 880-946 adopt a coiled-coil conformation; that stretch reads YKISIEELKK…EYTHLKNKVE (67 aa). An HEPN-like fold 2 region spans residues 947–1159; the sequence is FNELNLLQGL…YKMEEKKSEN (213 aa). The interval 962 to 963 is binds crRNA repeat; sequence HR. The binds 3'-end of target RNA, in adjacent protein stretch occupies residues 995–998; sequence FENK. Active-site for target RNA cleavage residues include R1048 and H1053. 2 binds crRNA processing site regions span residues 1072–1082 and 1104–1108; these read RKLLSYDRKLK and IGADK.

It belongs to the CRISPR-associated endoribonuclease Cas13a family. Crystals show the 3'-end of target RNA interacting with an adjacent protein molecule, and mutagenesis of those amino acid residues decreases target RNA cleavage, but it is not clear if this is physiological. It depends on a divalent metal cation as a cofactor.

Target RNA acts as an activator for non-specific ssRNA cleavage; the target RNA and complementary crRNA must both be at least 20 nucleotides long to activate the HEPN-like catalytic pocket for RNase activity. Its function is as follows. CRISPR (clustered regularly interspaced short palindromic repeat), is an adaptive immune system that provides protection against mobile genetic elements (viruses, transposable elements and conjugative plasmids). CRISPR clusters contain sequences complementary to antecedent mobile elements (spacer sequences) and target invading nucleic acids. Unlike many single-component effectors, this CRISPR-Cas system targets RNA. CRISPR clusters are transcribed from pre-CRISPR RNA (crRNA) and processed into crRNA by this protein. pre-crRNA processing yields a 5'-OH and probably a 2',3'-cyclic phosphate. Also cleaves pre-crRNA from several other type VI-A CRISPR systems. Cleaves linear target ssRNA in a crRNA-dependent fashion, preferentially before U residues. Cleavage of target ssRNA is about 80-fold faster than pre-crRNA processing and uses a different active site. Binding a viable target RNA target activates this protein for non-specific RNA degradation in vitro (called collateral RNA degradation). Activation occurs with 10 fM target RNA. crRNA maturation is not essential for activation of RNA degradation, but lack of mature crRNA (due to mutagenesis) decreases activation levels. This system has a 3' protospacer flanking site in the target RNA (PFS), which is C and unavailable to base pair with crRNA (PFS is equivalent to PAM, the protospacer adjacent motif). In Leptotrichia buccalis (strain ATCC 14201 / DSM 1135 / JCM 12969 / NCTC 10249 / C-1013-b), this protein is CRISPR-associated endoribonuclease Cas13a.